We begin with the raw amino-acid sequence, 114 residues long: Non-specific lipid-transfer protein 2 (114 aa).

The N-terminal stretch at 1 to 23 is a signal peptide; that stretch reads MEMFGKIACFVVFCMVVVAPHAE. Cystine bridges form between C27–C73, C37–C50, C51–C96, and C71–C110.

This sequence belongs to the plant LTP family.

In terms of biological role, plant non-specific lipid-transfer proteins transfer phospholipids as well as galactolipids across membranes. May play a role in wax or cutin deposition in the cell walls of expanding epidermal cells and certain secretory tissues. The chain is Non-specific lipid-transfer protein 2 (LE16) from Solanum lycopersicum (Tomato).